The following is an 89-amino-acid chain: Progonadoliberin-1 (89 aa).

The N-terminal stretch at 1–23 is a signal peptide; the sequence is MKAFPTFALLFLVLLFSAHVSDA. A Pyrrolidone carboxylic acid modification is found at glutamine 24. At glycine 33 the chain carries Glycine amide.

This sequence belongs to the GnRH family. Expressed in the forebrain from larval stages.

It localises to the secreted. Stimulates the secretion of gonadotropins. The chain is Progonadoliberin-1 (gnrh1) from Xenopus laevis (African clawed frog).